Reading from the N-terminus, the 169-residue chain is Allophycocyanin subunit beta-18 (169 aa).

Residue asparagine 72 is modified to N4-methylasparagine. Cysteine 82 is a binding site for (2R,3E)-phycocyanobilin.

It belongs to the phycobiliprotein family. Heterodimer of an alpha and a beta chain. In terms of processing, contains one covalently linked bilin chromophore.

The protein localises to the plastid. The protein resides in the chloroplast thylakoid membrane. Light-harvesting photosynthetic bile pigment-protein from the phycobiliprotein complex. Allophycocyanin has a maximum absorption at approximately 650 nanometers. In Pyropia yezoensis (Susabi-nori), this protein is Allophycocyanin subunit beta-18 (apcF).